Here is an 86-residue protein sequence, read N- to C-terminus: Kappa-theraphotoxin-Cg1a 2 (86 aa).

The first 21 residues, 1–21 (MKVSVVITLAVLGVMFVWASA), serve as a signal peptide directing secretion. Residues 22–50 (AELEERGSDQRDSPAWLKSMERIFQSEER) constitute a propeptide that is removed on maturation. Disulfide bonds link cysteine 52–cysteine 66, cysteine 59–cysteine 71, and cysteine 65–cysteine 78. Phenylalanine amide is present on phenylalanine 84.

This sequence belongs to the neurotoxin 10 (Hwtx-1) family. 28 (Jztx-11) subfamily. As to expression, expressed by the venom gland.

It is found in the secreted. This toxin acts as a voltage-dependent gating-modifier. It inhibits the sodium conductance (IC(50)=124 nM) and slows the fast inactivation (EC(50)=1180 nM) of Nav1.5/SCN5A. It significantly shifts the activation to more depolarized voltages and decreases the deactivation of Nav1.5 currents upon extreme depolarization, but only slightly affects voltage-dependence of steady-state inactivation. In addition, this toxin causes an approximately five-fold decrease in the rate of recovery from inactivation and an approximately 1.9-fold reduction in the closed-state inactivation rate. This toxin integrates the functions of site 3 toxins (alpha-scorpion toxins) with site 4 toxins (beta-scorpion and spider toxins) by targeting multiple sites on Nav1.5. Also shows inhibition of voltage-gated potassium channels (5 uM completely inhibits Kv2.1/KCNB1, whereas 5 uM moderately inhibits Kv4.2/KCND2 Kv4.1/KCND1 channels). The sequence is that of Kappa-theraphotoxin-Cg1a 2 from Chilobrachys guangxiensis (Chinese earth tiger tarantula).